The sequence spans 717 residues: Polyribonucleotide nucleotidyltransferase (717 aa).

Mg(2+) is bound by residues Asp486 and Asp492. The 60-residue stretch at 553–612 folds into the KH domain; the sequence is PKIVQLQIDIDKISLVIGSTGKTVKAITDEFEVRVQIEQDGRITLFGTDSLKMQKAKAKI. The 94-residue stretch at 622 to 715 folds into the S1 motif domain; sequence GEIYDGIVKK…KFGKIELELV (94 aa). Positions 659-689 are disordered; it reads RYGDMRHSRYGSGRHSRYGRDNRNTFGMNPP. Residues 666–675 are compositionally biased toward basic residues; sequence SRYGSGRHSR.

This sequence belongs to the polyribonucleotide nucleotidyltransferase family. It depends on Mg(2+) as a cofactor.

The protein localises to the cytoplasm. It carries out the reaction RNA(n+1) + phosphate = RNA(n) + a ribonucleoside 5'-diphosphate. In terms of biological role, involved in mRNA degradation. Catalyzes the phosphorolysis of single-stranded polyribonucleotides processively in the 3'- to 5'-direction. The chain is Polyribonucleotide nucleotidyltransferase from Borrelia hermsii (strain HS1 / DAH).